An 840-amino-acid polypeptide reads, in one-letter code: Phosphatidylinositol-glycan-specific phospholipase D (840 aa).

The signal sequence occupies residues 1 to 23; that stretch reads MSAFRLWPGLLIMLGSLCHRGSP. N-linked (GlcNAc...) asparagine glycans are attached at residues Asn94, Asn271, Asn292, Asn307, and Asn321. 7 FG-GAP repeats span residues 367–428, 436–497, 499–559, 563–623, 633–693, 704–770, and 788–840; these read SPLA…GLPP, EAHR…GGMS, SPNI…LSDK, NVEA…SLGR, QSWF…GATR, LLLS…TLGD, and QYVL…LGSD. Residues Asn501, Asn568, Asn591, Asn604, and Asn659 are each glycosylated (N-linked (GlcNAc...) asparagine).

Belongs to the GPLD1 family. In terms of assembly, monomer.

It localises to the secreted. It catalyses the reaction a 6-(alpha-D-glucosaminyl)-1-(1,2-diacyl-sn-glycero-3-phospho)-1D-myo-inositol + H2O = 6-(alpha-D-glucosaminyl)-1D-myo-inositol + a 1,2-diacyl-sn-glycero-3-phosphate + H(+). Its function is as follows. This protein hydrolyzes the inositol phosphate linkage in proteins anchored by phosphatidylinositol glycans (GPI-anchor) thus releasing these proteins from the membrane. The polypeptide is Phosphatidylinositol-glycan-specific phospholipase D (GPLD1) (Homo sapiens (Human)).